Consider the following 287-residue polypeptide: Octanoyl-[GcvH]:protein N-octanoyltransferase (287 aa).

The 209-residue stretch at Gly45–Tyr253 folds into the BPL/LPL catalytic domain. Cys150 (acyl-thioester intermediate) is an active-site residue.

Belongs to the octanoyltransferase LipL family.

The catalysed reaction is N(6)-octanoyl-L-lysyl-[glycine-cleavage complex H protein] + L-lysyl-[lipoyl-carrier protein] = N(6)-octanoyl-L-lysyl-[lipoyl-carrier protein] + L-lysyl-[glycine-cleavage complex H protein]. Its pathway is protein modification; protein lipoylation via endogenous pathway; protein N(6)-(lipoyl)lysine from octanoyl-[acyl-carrier-protein]. In terms of biological role, catalyzes the amidotransfer (transamidation) of the octanoyl moiety from octanoyl-GcvH to the lipoyl domain of the E2 subunit of lipoate-dependent enzymes. This Bacillus velezensis (strain DSM 23117 / BGSC 10A6 / LMG 26770 / FZB42) (Bacillus amyloliquefaciens subsp. plantarum) protein is Octanoyl-[GcvH]:protein N-octanoyltransferase.